We begin with the raw amino-acid sequence, 538 residues long: Potassium channel subfamily K member 10 (538 aa).

At 1-71 (MFFLYTDFFL…GLQTVMKWKT (71 aa)) the chain is on the cytoplasmic side. Residues 72–92 (VVAIFVVVVVYLVTGGLVFRA) traverse the membrane as a helical segment. N-linked (GlcNAc...) asparagine glycosylation is found at Asn-144, Asn-147, and Asn-148. Positions 154–180 (LGSAFFFAGTVITTIGYGNIAPSTEGG) form an intramembrane region, pore-forming. The K(+) site is built by Thr-167, Ile-168, Gly-169, and Tyr-170. The selectivity filter 1 stretch occupies residues 167-172 (TIGYGN). A helical transmembrane segment spans residues 182–202 (IFCILYAIFGIPLFGFLLAGI). Residues 203 to 233 (GDQLGTIFGKSIARVEKVFRKKQVSQTKIRV) lie on the Cytoplasmic side of the membrane. Residues 234 to 254 (ISTILFILAGCIVFVTIPAVI) form a helical membrane-spanning segment. Residues 263–294 (ALESIYFVVVTLTTVGFGDFVAGGNAGINYRE) constitute an intramembrane region (pore-forming). Positions 276, 277, 278, and 279 each coordinate K(+). A selectivity filter 2 region spans residues 276 to 281 (TVGFGD). Residues 299-319 (LVWFWILVGLAYFAAVLSMIG) traverse the membrane as a helical segment. The Cytoplasmic segment spans residues 320–538 (DWLRVLSKKT…ENNSLLEDRN (219 aa)). A compositionally biased stretch (polar residues) spans 412–421 (SQESINNRPN). Disordered stretches follow at residues 412–443 (SQES…EDNI) and 510–538 (QHAE…EDRN). A compositionally biased stretch (basic and acidic residues) spans 522–538 (DTKDREPENNSLLEDRN).

This sequence belongs to the two pore domain potassium channel (TC 1.A.1.8) family. Homodimer; disulfide-linked. Forms heterodimers with other 2-pore domain K(+) channel subunits, such as KCNK2, KCNK4 and KCNK18. Abundantly expressed in pancreas and kidney and to a lower level in brain, testis, colon, and small intestine. In brain, mainly expressed in cerebellum, occipital lobe, putamen, and thalamus. No expression is detected in amygdala and spinal cord. As to expression, strongly expressed in kidney (primarily in the proximal tubule) and pancreas. In terms of tissue distribution, abundantly expressed in brain.

It localises to the cell membrane. It carries out the reaction K(+)(in) = K(+)(out). It catalyses the reaction Rb(+)(in) = Rb(+)(out). The enzyme catalyses Cs(+)(in) = Cs(+)(out). With respect to regulation, activated by various stimuli including acidic pH, anesthetics chloroform, halothane and isoflurane, mechanical stretch, lipids such as arachidonic, docosahexaenoic and linoleic polyunsaturated fatty acids and lysophosphatidylcholine and lysophosphatidylinositol lysophospholipids. Inhibited by norfluoxetine, the active metabolite of antidepressant fluoxetine (Prozac). Its function is as follows. K(+) channel that conducts voltage-dependent outward rectifying currents upon membrane depolarization. Voltage sensing is coupled to K(+) electrochemical gradient in an 'ion flux gating' mode where outward but not inward ion flow opens the gate. Converts to voltage-independent 'leak' conductance mode upon stimulation by various stimuli including mechanical membrane stretch, acidic pH, heat and lipids. Homo- and heterodimerizes to form functional channels with distinct regulatory and gating properties. In trigeminal ganglia sensory neurons, the heterodimer of KCNK10/TREK-2 and KCNK18/TRESK inhibits neuronal firing and neurogenic inflammation by stabilizing the resting membrane potential at K(+) equilibrium potential as well as by regulating the threshold of action potentials and the spike frequency. Permeable to other monovalent ions such as Rb(+) and Cs(+). The polypeptide is Potassium channel subfamily K member 10 (Homo sapiens (Human)).